We begin with the raw amino-acid sequence, 837 residues long: MPAKKEQIQLQKEILNQEMWDELLSLEGLTVIDVYQKWCGPCAAVLSLFKRLRNEIGDDLLRFAVAEADSIETLERYRGKCEPCFLRYGSGQLVNVVRGVNAPALLKNVERELKQEHKVLEEGVERVVIKDPLLAAFEAEEQQAAQAEELEKKRLEEEARIKEIKELGDAGEVSVRPVSQGTVDTLMHGRQDGPQTEPVPKEVTVVLIKPDAVANGHVDSIIAKIEEHGFEILTTEDKTLTEDEAREFYKQHEEEEHFEVLVTFMASGPSKILVLTRGDTGEGVVSEVRNLLGPKDIEVAKEEAPDSLRAQFGTDKKMNAMHGADSKETAAREMAFLLPNFSVPIVPGTGPPPTIEKTLALIRPSALKDHKDEMLQKIQEAGFEVCLQKMVQLTEDQAKEFYKEQEGTPHFEDLIREMTSGEVLALGLAKESAIQSWREFIGPTTIDEAKEKAPDSLRAQYSIPDTQVNVVHGSDSVDTAEKELGFFFPKQTTLAVIKPDAAGEHKEAIIEKIKEAGFNISLQRDVELNKELASKLYLEHEGKEFYENLIDHMSSGLSMVMVLSREDAVDGWRTLMGPTDPDYAREHAPESLRALLGKDVLQNAVHGSSNPEEAKTRIERLFPDVEVLPGGEVKDSVASISMEQSQVKGEGEEGGEEQTEQPAGEGEEQQAEQPAAESGEQQAEGGEPATETATEGGEQQAEQPPAEGGEKPAEEETQQTQEGETPAADEAQAEQTQEGETPAADEAQAEQTQEGEEQKPAEEEAAPATEETAAEQAPAAEETQQTQEGEEKKEETEQTQDAPAAGGGEEAVATEGGGEGDAKPEGGEEKTEEQTAS.

Residues 6 to 115 (EQIQLQKEIL…LKNVERELKQ (110 aa)) enclose the Thioredoxin domain. A disulfide bond links Cys39 and Cys42. NDK regions lie at residues 201-345 (KEVT…SVPI), 355-491 (IEKT…FPKQ), and 493-629 (TLAV…EVLP). The segment at 633 to 837 (VKDSVASISM…EEKTEEQTAS (205 aa)) is disordered. The segment covering 638–647 (ASISMEQSQV) has biased composition (polar residues). Residues 652-670 (EEGGEEQTEQPAGEGEEQQ) are compositionally biased toward acidic residues. Composition is skewed to low complexity over residues 671-707 (AEQP…PPAE), 718-752 (QQTQ…AEQT), and 766-787 (APAT…QQTQ). Residues 805 to 819 (AGGGEEAVATEGGGE) show a composition bias toward gly residues. Residues 820–837 (GDAKPEGGEEKTEEQTAS) show a composition bias toward basic and acidic residues.

The protein in the C-terminal section; belongs to the NDK family. As to quaternary structure, monomer. Testis-specific. In sperm, it is a component of the arm dynein of sperm axoneme.

Its function is as follows. Probably required during the final stages of sperm tail maturation in the testis and/or epididymis, where extensive disulfide bonding of fibrous sheath (FS) proteins occurs. In vitro, it has neither nucleoside diphosphate kinase (NDPK) activity nor reducing activity on disulfide bonds. Exhibits a 3'-5' exonuclease activity with a preference for single-stranded DNA, suggesting roles in DNA proofreading and repair. The protein is Thioredoxin domain-containing protein 3 homolog (NME8) of Heliocidaris crassispina (Sea urchin).